Reading from the N-terminus, the 372-residue chain is Ciliary neurotrophic factor receptor subunit alpha (372 aa).

Residues 1–22 form the signal peptide; the sequence is MAASVPWACCAVLAAAAAAVYT. Positions 27–104 constitute an Ig-like C2-type domain; that stretch reads PQEAPHVQYE…WHLRHQVLLH (78 aa). Residues cysteine 46 and cysteine 89 are joined by a disulfide bond. N-linked (GlcNAc...) asparagine glycosylation is found at asparagine 60, asparagine 70, asparagine 142, and asparagine 190. Fibronectin type-III domains are found at residues 108–205 and 206–306; these read PPRE…VKPD and PPEN…TEEP. The WSXWS motif signature appears at 290-294; the sequence is WSDWS. Positions 301–338 are disordered; it reads PWTEEPRHLTTEAQAPETTTSTTSSLAPPPTTKICDPG. Over residues 311 to 326 the composition is skewed to low complexity; sequence TEAQAPETTTSTTSSL. The GPI-anchor amidated serine moiety is linked to residue serine 342. A propeptide spans 343–372 (removed in mature form); the sequence is GGGPSILFLTSVPVTLVLAAAAATANNLLI.

It belongs to the type I cytokine receptor family. Type 3 subfamily. Forms a heterotrimer with LIFR and IL6ST. Interacts with heterodimeric neurotropic cytokine composed of CLCF1/CLC and CRLF1/CLF-1. Either alone or in complex with the heterodimer CLCF1-CRLF1 interacts with SORL1; this interaction may promote internalization and lysosomal degradation.

The protein localises to the cell membrane. Binds to CNTF. The alpha subunit provides the receptor specificity. The sequence is that of Ciliary neurotrophic factor receptor subunit alpha (Cntfr) from Mus musculus (Mouse).